Here is a 238-residue protein sequence, read N- to C-terminus: Pyridoxine 5'-phosphate synthase (238 aa).

2 residues coordinate 3-amino-2-oxopropyl phosphate: asparagine 7 and arginine 18. Catalysis depends on histidine 43, which acts as the Proton acceptor. The 1-deoxy-D-xylulose 5-phosphate site is built by arginine 45 and histidine 50. Glutamate 70 acts as the Proton acceptor in catalysis. A 1-deoxy-D-xylulose 5-phosphate-binding site is contributed by threonine 100. Histidine 190 acts as the Proton donor in catalysis. 3-amino-2-oxopropyl phosphate is bound by residues aspartate 191 and 213–214 (GH).

The protein belongs to the PNP synthase family. Homooctamer; tetramer of dimers.

The protein localises to the cytoplasm. The enzyme catalyses 3-amino-2-oxopropyl phosphate + 1-deoxy-D-xylulose 5-phosphate = pyridoxine 5'-phosphate + phosphate + 2 H2O + H(+). It functions in the pathway cofactor biosynthesis; pyridoxine 5'-phosphate biosynthesis; pyridoxine 5'-phosphate from D-erythrose 4-phosphate: step 5/5. Functionally, catalyzes the complicated ring closure reaction between the two acyclic compounds 1-deoxy-D-xylulose-5-phosphate (DXP) and 3-amino-2-oxopropyl phosphate (1-amino-acetone-3-phosphate or AAP) to form pyridoxine 5'-phosphate (PNP) and inorganic phosphate. The polypeptide is Pyridoxine 5'-phosphate synthase (Phocaeicola vulgatus (strain ATCC 8482 / DSM 1447 / JCM 5826 / CCUG 4940 / NBRC 14291 / NCTC 11154) (Bacteroides vulgatus)).